The following is a 542-amino-acid chain: Putative DEAD-box ATP-dependent RNA helicase 43 (542 aa).

The short motif at 97–125 is the Q motif element; it reads KNFMDMKFPSPLLRMLKDKGIMHPTPIQV. Residues 128–312 form the Helicase ATP-binding domain; that stretch reads LPVVLSGRDM…TSALVKPVTV (185 aa). 141 to 148 serves as a coordination point for ATP; that stretch reads AFTGSGKT. Residues 260–263 carry the DEAD box motif; the sequence is DEAD. The Helicase C-terminal domain occupies 323 to 483; sequence DVIQEVEYVK…RIPPVLAELN (161 aa). The segment at 499 to 516 adopts a CCHC-type zinc-finger fold; that stretch reads KGCAYCGGLGHRILQCPK.

It belongs to the DEAD box helicase family. DDX41 subfamily.

The enzyme catalyses ATP + H2O = ADP + phosphate + H(+). The sequence is that of Putative DEAD-box ATP-dependent RNA helicase 43 (RH43) from Arabidopsis thaliana (Mouse-ear cress).